Consider the following 272-residue polypeptide: Dermonecrotic toxin SpeSicTox-betaIB1a (272 aa).

The active site involves His-5. Residues Glu-25 and Asp-27 each coordinate Mg(2+). His-41 acts as the Nucleophile in catalysis. Intrachain disulfides connect Cys-45–Cys-51 and Cys-47–Cys-191. Residue Asp-85 coordinates Mg(2+).

The protein belongs to the arthropod phospholipase D family. Class II subfamily. It depends on Mg(2+) as a cofactor. Expressed by the venom gland.

It localises to the secreted. The enzyme catalyses an N-(acyl)-sphingosylphosphocholine = an N-(acyl)-sphingosyl-1,3-cyclic phosphate + choline. It catalyses the reaction an N-(acyl)-sphingosylphosphoethanolamine = an N-(acyl)-sphingosyl-1,3-cyclic phosphate + ethanolamine. The catalysed reaction is a 1-acyl-sn-glycero-3-phosphocholine = a 1-acyl-sn-glycero-2,3-cyclic phosphate + choline. It carries out the reaction a 1-acyl-sn-glycero-3-phosphoethanolamine = a 1-acyl-sn-glycero-2,3-cyclic phosphate + ethanolamine. Its function is as follows. Dermonecrotic toxins cleave the phosphodiester linkage between the phosphate and headgroup of certain phospholipids (sphingolipid and lysolipid substrates), forming an alcohol (often choline) and a cyclic phosphate. This toxin acts on sphingomyelin (SM). It may also act on ceramide phosphoethanolamine (CPE), lysophosphatidylcholine (LPC) and lysophosphatidylethanolamine (LPE), but not on lysophosphatidylserine (LPS), and lysophosphatidylglycerol (LPG). It acts by transphosphatidylation, releasing exclusively cyclic phosphate products as second products. Induces dermonecrosis, hemolysis, increased vascular permeability, edema, inflammatory response, and platelet aggregation. The sequence is that of Dermonecrotic toxin SpeSicTox-betaIB1a from Sicarius peruensis (Six-eyed sand spider).